Reading from the N-terminus, the 99-residue chain is Probable small ribosomal subunit protein cS23 (99 aa).

It belongs to the chloroplast-specific ribosomal protein cS23 family. In terms of assembly, part of the 30S ribosomal subunit.

Probably a ribosomal protein or a ribosome-associated protein. This is Probable small ribosomal subunit protein cS23 from Synechococcus sp. (strain JA-2-3B'a(2-13)) (Cyanobacteria bacterium Yellowstone B-Prime).